The chain runs to 539 residues: 2,3-dihydroxybenzoate-AMP ligase (539 aa).

Position 191 (G191) interacts with ATP. Residues 234–235 (HN) and S240 contribute to the substrate site. Residues G307, V329, D413, R428, and K519 each contribute to the ATP site. K519 lines the substrate pocket.

Belongs to the ATP-dependent AMP-binding enzyme family.

The protein resides in the cytoplasm. The enzyme catalyses 2,3-dihydroxybenzoate + holo-[ACP] + ATP = 2,3-dihydroxybenzoyl-[ACP] + AMP + diphosphate. It participates in siderophore biosynthesis; bacillibactin biosynthesis. Involved in the biosynthesis of the catecholic siderophore bacillibactin. Catalyzes the activation of the carboxylate group of 2,3-dihydroxy-benzoate (DHB), via ATP-dependent PPi exchange reactions, to the acyladenylate. The polypeptide is 2,3-dihydroxybenzoate-AMP ligase (Bacillus subtilis (strain 168)).